A 412-amino-acid chain; its full sequence is Serine hydroxymethyltransferase 1 (412 aa).

(6S)-5,6,7,8-tetrahydrofolate-binding positions include Leu116 and 120-122 (GHL). Lys225 carries the N6-(pyridoxal phosphate)lysine modification.

The protein belongs to the SHMT family. In terms of assembly, homodimer. Pyridoxal 5'-phosphate serves as cofactor.

The protein localises to the cytoplasm. It catalyses the reaction (6R)-5,10-methylene-5,6,7,8-tetrahydrofolate + glycine + H2O = (6S)-5,6,7,8-tetrahydrofolate + L-serine. The protein operates within one-carbon metabolism; tetrahydrofolate interconversion. It participates in amino-acid biosynthesis; glycine biosynthesis; glycine from L-serine: step 1/1. In terms of biological role, catalyzes the reversible interconversion of serine and glycine with tetrahydrofolate (THF) serving as the one-carbon carrier. This reaction serves as the major source of one-carbon groups required for the biosynthesis of purines, thymidylate, methionine, and other important biomolecules. Also exhibits THF-independent aldolase activity toward beta-hydroxyamino acids, producing glycine and aldehydes, via a retro-aldol mechanism. The sequence is that of Serine hydroxymethyltransferase 1 from Pseudomonas fluorescens (strain Pf0-1).